The sequence spans 265 residues: Hydroxyethylthiazole kinase (265 aa).

M50 is a binding site for substrate. The ATP site is built by R125 and T171. G198 is a binding site for substrate.

Belongs to the Thz kinase family. The cofactor is Mg(2+).

It carries out the reaction 5-(2-hydroxyethyl)-4-methylthiazole + ATP = 4-methyl-5-(2-phosphooxyethyl)-thiazole + ADP + H(+). It functions in the pathway cofactor biosynthesis; thiamine diphosphate biosynthesis; 4-methyl-5-(2-phosphoethyl)-thiazole from 5-(2-hydroxyethyl)-4-methylthiazole: step 1/1. Functionally, catalyzes the phosphorylation of the hydroxyl group of 4-methyl-5-beta-hydroxyethylthiazole (THZ). This chain is Hydroxyethylthiazole kinase, found in Salmonella paratyphi C (strain RKS4594).